The chain runs to 82 residues: Beta-defensin 113 (82 aa).

The N-terminal stretch at 1-16 (MKILCIFLTFVFTVSC) is a signal peptide. 3 disulfides stabilise this stretch: cysteine 35–cysteine 61, cysteine 42–cysteine 56, and cysteine 46–cysteine 62.

Belongs to the beta-defensin family.

It localises to the secreted. Its function is as follows. Has antibacterial activity. This chain is Beta-defensin 113 (DEFB113), found in Homo sapiens (Human).